A 122-amino-acid chain; its full sequence is Large ribosomal subunit protein uL18 (122 aa).

It belongs to the universal ribosomal protein uL18 family. In terms of assembly, part of the 50S ribosomal subunit; part of the 5S rRNA/L5/L18/L25 subcomplex. Contacts the 5S and 23S rRNAs.

Its function is as follows. This is one of the proteins that bind and probably mediate the attachment of the 5S RNA into the large ribosomal subunit, where it forms part of the central protuberance. This is Large ribosomal subunit protein uL18 from Geobacter sp. (strain M21).